The sequence spans 909 residues: Lon protease homolog 2, peroxisomal (909 aa).

The 230-residue stretch at 1–230 folds into the Lon N-terminal domain; sequence MAPVRAPTAR…KVIELLDRQV (230 aa). A disordered region spans residues 249-269; it reads FPMDPDSTKPGKVKPPVKAPG. 463–470 contributes to the ATP binding site; it reads GPPGVGKT. The Lon proteolytic domain occupies 706 to 893; the sequence is TSRPGIVTGL…WEAIRYVWPD (188 aa). Catalysis depends on residues S799 and K842. Positions 907–909 match the Microbody targeting signal motif; that stretch reads SRL.

It belongs to the peptidase S16 family.

It is found in the peroxisome matrix. The protein resides in the cytoplasm. The enzyme catalyses Hydrolysis of proteins in presence of ATP.. Its function is as follows. ATP-dependent serine protease that mediates the selective degradation of misfolded and unassembled polypeptides in the peroxisomal matrix. Necessary for type 2 peroxisome targeting signal (PTS2)-containing protein processing and facilitates peroxisome matrix protein import. This Sordaria macrospora (strain ATCC MYA-333 / DSM 997 / K(L3346) / K-hell) protein is Lon protease homolog 2, peroxisomal.